Consider the following 222-residue polypeptide: MSSLSKEAVLVHEALVARGLETPMRAPVQEIDNETRKRLITGHMTEIMQLLNLDLSDDSLMETPHRIAKMYVDEIFSGLDYSRFPKITVIENKMKVDEMVTVRDITLTSTCEHHFVTIDGKATVAYIPKDAVIGLSKINRIVQFFAQRPQVQERLTQQILIALQTLLGTSNVAVSIDAVHYCVKARGIRDATSATTTTSLGGLFKSSQNTRQEFLRAVRHHN.

Zn(2+)-binding residues include Cys111, His114, and Cys182.

The protein belongs to the GTP cyclohydrolase I family. In terms of assembly, homomer.

The enzyme catalyses GTP + H2O = 7,8-dihydroneopterin 3'-triphosphate + formate + H(+). It functions in the pathway cofactor biosynthesis; 7,8-dihydroneopterin triphosphate biosynthesis; 7,8-dihydroneopterin triphosphate from GTP: step 1/1. The polypeptide is GTP cyclohydrolase 1 (Klebsiella pneumoniae (strain 342)).